The chain runs to 244 residues: Lipid A 1-phosphatase (244 aa).

6 helical membrane passes run 28-48 (LFVTLNAVILSMLLFDAPIGA), 60-80 (ELLTGFGDSAWLIYTSILLFF), 98-118 (ALYVSWIGAYLFFTVVFSGLL), 154-174 (FPSGHSTTVGAFFAAFALLFP), 178-198 (VAFIACAIWLGMTRVMVGAHY), and 201-221 (DVIAGLAFGAWFSLLTAIVFA).

This sequence belongs to the lipid A LpxE 1-phosphatase family.

It localises to the cell inner membrane. The protein operates within bacterial outer membrane biogenesis; LPS lipid A biosynthesis. Its function is as follows. Removes the 1-phosphate group from (tetraacyl) lipid A species, has no requirement for the Kdo(2) moiety of lipid A. Has no 4'-phosphatase activity. Reduces sensitivity of S.meliloti strain 1021 to the cationic antimicrobial peptide (CAMP) polymyxin B. This Rhizobium johnstonii (strain DSM 114642 / LMG 32736 / 3841) (Rhizobium leguminosarum bv. viciae) protein is Lipid A 1-phosphatase.